The following is a 605-amino-acid chain: Solute carrier family 23 member 1 (605 aa).

Positions 1–30 (MKTPEDPGSPKQHEVVDSAGTSTRDRQAPL) are disordered. Topologically, residues 1 to 59 (MKTPEDPGSPKQHEVVDSAGTSTRDRQAPLPTEPKFDMLYKIEDVPPWYLCILLGFQHY) are cytoplasmic. Residues 60-80 (LTCFSGTIAVPFLLAEALCVG) traverse the membrane as a helical segment. The Extracellular segment spans residues 81–88 (RDQHMVSQ). The helical transmembrane segment at 89-109 (LIGTIFTCVGITTLIQTTVGI) threads the bilayer. A topological domain (cytoplasmic) is located at residue Arg-110. Residues 111–131 (LPLFQASAFAFLVPAKSILAL) form a helical membrane-spanning segment. Residues 132–166 (ERWKCPSEEEIYGNWSMPLNTSHIWHPRIREVQGA) lie on the Extracellular side of the membrane. N-linked (GlcNAc...) asparagine glycans are attached at residues Asn-145 and Asn-151. A helical transmembrane segment spans residues 167 to 187 (IMVSSMVEVVIGLMGLPGALL). Residues 188–214 (SYIGPLTVTPTVSLIGLSVFQAAGDRA) are Cytoplasmic-facing. A helical membrane pass occupies residues 215–232 (GSHWGISACSILLIVLFS). At 233–236 (QYLR) the chain is on the extracellular side. Positions 237-250 (NLTFLLPVYRWGKG) form an intramembrane region, helical. The Extracellular portion of the chain corresponds to 251-257 (LTLFRVQ). The helical transmembrane segment at 258-278 (IFKMFPIVLAIMTVWLLCYVL) threads the bilayer. At 279–319 (TLTDVLPADPTVYGFQARTDARGDIMAISPWIRIPYPCQWG) the chain is on the cytoplasmic side. Residues 320-340 (LPTVTVAAVLGMFSATLAGII) traverse the membrane as a helical segment. The Extracellular portion of the chain corresponds to 341–365 (ESIGDYYACARLAGAPPPPVHAINR). A helical transmembrane segment spans residues 366–386 (GIFTEGICCIIAGLLGTGNGS). At 387 to 409 (TSSSPNIGVLGITKVGSRRVVQY) the chain is on the cytoplasmic side. A helical membrane pass occupies residues 410 to 430 (GAGIMLILGAIGKFTALFASL). Residues 431-433 (PDP) lie on the Extracellular side of the membrane. A helical membrane pass occupies residues 434 to 454 (ILGGMFCTLFGMITAVGLSNL). Residues 455-464 (QFVDMNSSRN) lie on the Cytoplasmic side of the membrane. The helical transmembrane segment at 465 to 485 (LFVLGFSMFFGLTLPNYLDSN) threads the bilayer. Topologically, residues 486–497 (PGAINTGIPEVD) are extracellular. A helical transmembrane segment spans residues 498–518 (QILTVLLTTEMFVGGCLAFIL). Topologically, residues 519-605 (DNTVPGSPEE…IETGSVCTKV (87 aa)) are cytoplasmic. Thr-598 bears the Phosphothreonine mark. Residue Ser-600 is modified to Phosphoserine. A Phosphothreonine modification is found at Thr-603.

This sequence belongs to the nucleobase:cation symporter-2 (NCS2) (TC 2.A.40) family. Post-translationally, phosphorylated. Expressed in kidney (at protein level).

Its subcellular location is the cell membrane. It carries out the reaction L-ascorbate(out) + 2 Na(+)(out) = L-ascorbate(in) + 2 Na(+)(in). The catalysed reaction is urate(out) + 2 Na(+)(out) = urate(in) + 2 Na(+)(in). In terms of biological role, sodium:L-ascorbate cotransporter. Mediates electrogenic uptake of vitamin C, with a stoichiometry of 2 Na(+) for each L-ascorbate. Has retained some ancestral activity toward nucleobases such as urate, an oxidized purine. Low-affinity high-capacity sodium:urate cotransporter, may regulate serum urate levels by serving as a renal urate re-absorber. The sequence is that of Solute carrier family 23 member 1 (Slc23a1) from Mus musculus (Mouse).